Reading from the N-terminus, the 350-residue chain is Heat-inducible transcription repressor HrcA (350 aa).

It belongs to the HrcA family.

Its function is as follows. Negative regulator of class I heat shock genes (grpE-dnaK-dnaJ and groELS operons). Prevents heat-shock induction of these operons. The sequence is that of Heat-inducible transcription repressor HrcA from Xanthomonas euvesicatoria pv. vesicatoria (strain 85-10) (Xanthomonas campestris pv. vesicatoria).